Reading from the N-terminus, the 218-residue chain is Adenylate kinase (218 aa).

ATP is bound at residue 10 to 15 (GAGKGT). The NMP stretch occupies residues 30-59 (STGDMLRAAVKAGTPLGIAAKKIMDEGGLV). AMP contacts are provided by residues T31, R36, 57-59 (GLV), 85-88 (GFPR), and Q92. The LID stretch occupies residues 122 to 159 (GRRVHPASGRTYHVKFNPPKVAGKDDLTGEELIQRDDD). Residues R123 and 132–133 (TY) contribute to the ATP site. The AMP site is built by R156 and R167. G203 serves as a coordination point for ATP.

Belongs to the adenylate kinase family. As to quaternary structure, monomer.

It is found in the cytoplasm. The enzyme catalyses AMP + ATP = 2 ADP. It functions in the pathway purine metabolism; AMP biosynthesis via salvage pathway; AMP from ADP: step 1/1. Its function is as follows. Catalyzes the reversible transfer of the terminal phosphate group between ATP and AMP. Plays an important role in cellular energy homeostasis and in adenine nucleotide metabolism. This is Adenylate kinase from Janthinobacterium sp. (strain Marseille) (Minibacterium massiliensis).